The chain runs to 92 residues: Probable Fe(2+)-trafficking protein (92 aa).

It belongs to the Fe(2+)-trafficking protein family.

Its function is as follows. Could be a mediator in iron transactions between iron acquisition and iron-requiring processes, such as synthesis and/or repair of Fe-S clusters in biosynthetic enzymes. The sequence is that of Probable Fe(2+)-trafficking protein from Shewanella baltica (strain OS223).